Consider the following 199-residue polypeptide: Crossover junction endodeoxyribonuclease RuvC (199 aa).

Active-site residues include Asp-17, Glu-76, and Asp-148. Mg(2+)-binding residues include Asp-17, Glu-76, and Asp-148.

The protein belongs to the RuvC family. Homodimer which binds Holliday junction (HJ) DNA. The HJ becomes 2-fold symmetrical on binding to RuvC with unstacked arms; it has a different conformation from HJ DNA in complex with RuvA. In the full resolvosome a probable DNA-RuvA(4)-RuvB(12)-RuvC(2) complex forms which resolves the HJ. The cofactor is Mg(2+).

It is found in the cytoplasm. The catalysed reaction is Endonucleolytic cleavage at a junction such as a reciprocal single-stranded crossover between two homologous DNA duplexes (Holliday junction).. Its function is as follows. The RuvA-RuvB-RuvC complex processes Holliday junction (HJ) DNA during genetic recombination and DNA repair. Endonuclease that resolves HJ intermediates. Cleaves cruciform DNA by making single-stranded nicks across the HJ at symmetrical positions within the homologous arms, yielding a 5'-phosphate and a 3'-hydroxyl group; requires a central core of homology in the junction. The consensus cleavage sequence is 5'-(A/T)TT(C/G)-3'. Cleavage occurs on the 3'-side of the TT dinucleotide at the point of strand exchange. HJ branch migration catalyzed by RuvA-RuvB allows RuvC to scan DNA until it finds its consensus sequence, where it cleaves and resolves the cruciform DNA. The sequence is that of Crossover junction endodeoxyribonuclease RuvC from Mannheimia succiniciproducens (strain KCTC 0769BP / MBEL55E).